A 434-amino-acid chain; its full sequence is ATP-dependent RNA helicase uap56 (434 aa).

A disordered region spans residues 1-43; sequence MASAQEDLIDYEEEEELVQDQPAQEITPAADTAENGEKSDKKG. Residues 7-18 show a composition bias toward acidic residues; that stretch reads DLIDYEEEEELV. A Q motif motif is present at residues 51 to 79; the sequence is TGFRDFLLKPELLRAITDSGFEHPSEVQQ. A Helicase ATP-binding domain is found at 82-257; it reads IPQSILGTDV…KKFMQNPLEI (176 aa). An ATP-binding site is contributed by 95 to 102; the sequence is AKSGMGKT. Residues 204-207 carry the DECD box motif; the sequence is DECD. The 162-residue stretch at 269–430 folds into the Helicase C-terminal domain; sequence GLQQHYVKLE…ELPDEIDVGS (162 aa).

The protein belongs to the DEAD box helicase family. DECD subfamily. As to quaternary structure, interacts with mlo3 and rae1.

Its subcellular location is the nucleus. It catalyses the reaction ATP + H2O = ADP + phosphate + H(+). ATP-binding RNA helicase involved in transcription elongation and required for the export of mRNA out of the nucleus. SUB2 also plays a role in pre-mRNA splicing and spliceosome assembly. May be involved in rDNA and telomeric silencing, and maintenance of genome integrity. Links the mRNA adapter mlo3 to rae1 for targeting mRNA-protein complex to the proteins of the nucleoporin complex (NPC). This is ATP-dependent RNA helicase uap56 (uap56) from Schizosaccharomyces pombe (strain 972 / ATCC 24843) (Fission yeast).